The primary structure comprises 729 residues: Sodium-dependent neutral amino acid transporter B(0)AT2 (729 aa).

The Cytoplasmic segment spans residues 1-69 (MPKNSKVVKR…ERPAWNSKLQ (69 aa)). Phosphoserine is present on residues Ser-25 and Ser-55. The next 3 membrane-spanning stretches (helical) occupy residues 70–90 (YILA…FPYL), 98–117 (AYLL…LFFL), and 142–162 (GIGF…NVII). Over 163–225 (GWTLFYFSQS…SSISESGGLN (63 aa)) the chain is Extracellular. Asn-187 carries an N-linked (GlcNAc...) asparagine glycan. The next 4 helical transmembrane spans lie at 226-244 (WKMT…LAMI), 253-270 (IMYF…CFLI), 306-323 (VFFA…FSSY), and 335-356 (VLVS…FAVL). At 357–452 (GFKANIVNEK…FIAFTEAMTH (96 aa)) the chain is on the extracellular side. N-linked (GlcNAc...) asparagine glycans are attached at residues Asn-383 and Asn-394. A run of 5 helical transmembrane segments spans residues 453–472 (FPAS…NLGL), 496–514 (ILTV…MFVQ), 530–550 (TLPL…VYGI), 571–592 (YMWK…IVNM), and 620–642 (VVCF…IRRC). At 643-729 (NLIDDSSGNL…DMPDMPESDL (87 aa)) the chain is on the cytoplasmic side. A phosphoserine mark is found at Ser-687, Ser-699, and Ser-701.

The protein belongs to the sodium:neurotransmitter symporter (SNF) (TC 2.A.22) family. SLC6A15 subfamily. As to expression, widely distributed in the central nervous system, including the olfactory bulb, the hypothalamus, the cerebral cortex, the hippocampus, and the cerebellum. In addition, intense expression is found in the motor nuclei including the oculomotor nucleus, abducens nucleus, trigeminal motor nucleus, facial nucleus, hypoglossal nucleus and ventral horn of spinal cord. Intense hybridization signals are also observed in the nuclei containing monoaminergic neurons, such as locus coeruleus, the substantia nigra pars compacta, the ventral tegmental area, the dorsal raphe nucleus and the median raphe nucleus.

It is found in the membrane. It catalyses the reaction L-leucine(in) + Na(+)(in) = L-leucine(out) + Na(+)(out). It carries out the reaction L-isoleucine(in) + Na(+)(in) = L-isoleucine(out) + Na(+)(out). The catalysed reaction is L-methionine(in) + Na(+)(in) = L-methionine(out) + Na(+)(out). The enzyme catalyses L-proline(in) + Na(+)(in) = L-proline(out) + Na(+)(out). It catalyses the reaction L-alanine(in) + Na(+)(in) = L-alanine(out) + Na(+)(out). It carries out the reaction L-asparagine(in) + Na(+)(in) = L-asparagine(out) + Na(+)(out). The catalysed reaction is L-valine(in) + Na(+)(in) = L-valine(out) + Na(+)(out). The enzyme catalyses L-cysteine(in) + Na(+)(in) = L-cysteine(out) + Na(+)(out). It catalyses the reaction L-glutamine(in) + Na(+)(in) = L-glutamine(out) + Na(+)(out). It carries out the reaction L-serine(in) + Na(+)(in) = L-serine(out) + Na(+)(out). The catalysed reaction is L-threonine(in) + Na(+)(in) = L-threonine(out) + Na(+)(out). The enzyme catalyses L-pipecolate(in) + Na(+)(in) = L-pipecolate(out) + Na(+)(out). It catalyses the reaction L-phenylalanine(in) + Na(+)(in) = L-phenylalanine(out) + Na(+)(out). Functionally, functions as a sodium-dependent neutral amino acid transporter. Exhibits preference for the branched-chain amino acids, particularly leucine, valine and isoleucine and methionine. Can also transport low-affinity substrates such as alanine, phenylalanine, glutamine and pipecolic acid. Mediates the saturable, pH-sensitive and electrogenic cotransport of proline and sodium ions with a stoichiometry of 1:1. May have a role as transporter for neurotransmitter precursors into neurons. In contrast to other members of the neurotransmitter transporter family, does not appear to be chloride-dependent. This chain is Sodium-dependent neutral amino acid transporter B(0)AT2 (Slc6a15), found in Rattus norvegicus (Rat).